A 63-amino-acid chain; its full sequence is Cytochrome c oxidase subunit 7C, mitochondrial (63 aa).

Residues 1-16 constitute a mitochondrion transit peptide; that stretch reads MLGQSIRRFTTSVVRR. Over 17–33 the chain is Mitochondrial matrix; sequence SHYEEGPGKNIPFSVEN. K25 carries the post-translational modification N6-acetyllysine; alternate. K25 is modified (N6-succinyllysine; alternate). The chain crosses the membrane as a helical span at residues 34-60; it reads KWRLLAMMTLFFGSGFAAPFFIVRHQL. Residues 61-63 lie on the Mitochondrial intermembrane side of the membrane; that stretch reads LKK.

It belongs to the cytochrome c oxidase VIIc family. In terms of assembly, component of the cytochrome c oxidase (complex IV, CIV), a multisubunit enzyme composed of 14 subunits. The complex is composed of a catalytic core of 3 subunits MT-CO1, MT-CO2 and MT-CO3, encoded in the mitochondrial DNA, and 11 supernumerary subunits COX4I1 (or COX4I2), COX5A, COX5B, COX6A2 (or COX6A1), COX6B1 (or COX6B2), COX6C, COX7A1 (or COX7A2), COX7B, COX7C, COX8B and NDUFA4, which are encoded in the nuclear genome. The complex exists as a monomer or a dimer and forms supercomplexes (SCs) in the inner mitochondrial membrane with NADH-ubiquinone oxidoreductase (complex I, CI) and ubiquinol-cytochrome c oxidoreductase (cytochrome b-c1 complex, complex III, CIII), resulting in different assemblies (supercomplex SCI(1)III(2)IV(1) and megacomplex MCI(2)III(2)IV(2)). Interacts with RAB5IF. As to expression, liver, heart, muscle and brain, contain the same isoform of COX VIIc, but at different concentrations.

The protein localises to the mitochondrion inner membrane. The protein operates within energy metabolism; oxidative phosphorylation. Functionally, component of the cytochrome c oxidase, the last enzyme in the mitochondrial electron transport chain which drives oxidative phosphorylation. The respiratory chain contains 3 multisubunit complexes succinate dehydrogenase (complex II, CII), ubiquinol-cytochrome c oxidoreductase (cytochrome b-c1 complex, complex III, CIII) and cytochrome c oxidase (complex IV, CIV), that cooperate to transfer electrons derived from NADH and succinate to molecular oxygen, creating an electrochemical gradient over the inner membrane that drives transmembrane transport and the ATP synthase. Cytochrome c oxidase is the component of the respiratory chain that catalyzes the reduction of oxygen to water. Electrons originating from reduced cytochrome c in the intermembrane space (IMS) are transferred via the dinuclear copper A center (CU(A)) of subunit 2 and heme A of subunit 1 to the active site in subunit 1, a binuclear center (BNC) formed by heme A3 and copper B (CU(B)). The BNC reduces molecular oxygen to 2 water molecules using 4 electrons from cytochrome c in the IMS and 4 protons from the mitochondrial matrix. The polypeptide is Cytochrome c oxidase subunit 7C, mitochondrial (COX7C) (Bos taurus (Bovine)).